The sequence spans 274 residues: tRNA-cytidine(32) 2-sulfurtransferase (274 aa).

Residues 40–45 carry the PP-loop motif motif; the sequence is SGGKDS. 3 residues coordinate [4Fe-4S] cluster: C115, C118, and C206.

It belongs to the TtcA family. As to quaternary structure, homodimer. Mg(2+) serves as cofactor. The cofactor is [4Fe-4S] cluster.

The protein resides in the cytoplasm. It carries out the reaction cytidine(32) in tRNA + S-sulfanyl-L-cysteinyl-[cysteine desulfurase] + AH2 + ATP = 2-thiocytidine(32) in tRNA + L-cysteinyl-[cysteine desulfurase] + A + AMP + diphosphate + H(+). It participates in tRNA modification. Catalyzes the ATP-dependent 2-thiolation of cytidine in position 32 of tRNA, to form 2-thiocytidine (s(2)C32). The sulfur atoms are provided by the cysteine/cysteine desulfurase (IscS) system. This is tRNA-cytidine(32) 2-sulfurtransferase from Pseudomonas paraeruginosa (strain DSM 24068 / PA7) (Pseudomonas aeruginosa (strain PA7)).